A 579-amino-acid chain; its full sequence is Acetolactate synthase (579 aa).

Glutamate 61 contributes to the thiamine diphosphate binding site. Residues arginine 163, 274 to 295 (HGTA…VGVR), and 317 to 336 (DIDP…IVGD) contribute to the FAD site. The interval 408 to 487 (QHQMWAGQFV…VKVIILNNGW (80 aa)) is thiamine pyrophosphate binding. Mg(2+)-binding residues include aspartate 458 and asparagine 485.

Belongs to the TPP enzyme family. Requires Mg(2+) as cofactor. Thiamine diphosphate serves as cofactor.

It carries out the reaction 2 pyruvate + H(+) = (2S)-2-acetolactate + CO2. Its pathway is amino-acid biosynthesis; L-isoleucine biosynthesis; L-isoleucine from 2-oxobutanoate: step 1/4. It functions in the pathway amino-acid biosynthesis; L-valine biosynthesis; L-valine from pyruvate: step 1/4. The protein is Acetolactate synthase (ilvY) of Arthrospira platensis (Spirulina platensis).